Consider the following 433-residue polypeptide: Homogentisate 1,2-dioxygenase (433 aa).

The active-site Proton acceptor is the histidine 288. The Fe cation site is built by histidine 331 and glutamate 337. Homogentisate-binding residues include tyrosine 346 and histidine 367. Histidine 367 is a binding site for Fe cation.

Belongs to the homogentisate dioxygenase family. Hexamer; dimer of trimers. Fe cation serves as cofactor.

The enzyme catalyses homogentisate + O2 = 4-maleylacetoacetate + H(+). It participates in amino-acid degradation; L-phenylalanine degradation; acetoacetate and fumarate from L-phenylalanine: step 4/6. In terms of biological role, involved in the catabolism of homogentisate (2,5-dihydroxyphenylacetate or 2,5-OH-PhAc), a central intermediate in the degradation of phenylalanine and tyrosine. Catalyzes the oxidative ring cleavage of the aromatic ring of homogentisate to yield maleylacetoacetate. The chain is Homogentisate 1,2-dioxygenase from Pseudomonas putida (strain W619).